The sequence spans 582 residues: Protein LYRIC (582 aa).

The Lumenal portion of the chain corresponds to 1-48; that stretch reads MAARSWQDELAQQAEEGSARLREMLSVGLGFLRTELGLDLGLEPKRYP. An activation of NF-kappa-B region spans residues 1–71; it reads MAARSWQDEL…LLLFLLGYGW (71 aa). A helical membrane pass occupies residues 49-69; sequence GWVILVGTGALGLLLLFLLGY. Residues 70–582 lie on the Cytoplasmic side of the membrane; the sequence is GWAAACAGAR…KKKKKARRET (513 aa). Positions 72-169 are interaction with BCCIP; it reads AAACAGARKK…EKSKKNKKKS (98 aa). Residues 78–222 form a disordered region; that stretch reads ARKKRRSPPR…DSGSLDSTIP (145 aa). A compositionally biased stretch (low complexity) spans 93–106; that stretch reads AAVPAAAPDDLALL. Residues 101 to 205 are interaction with RELA; that stretch reads DDLALLKNLR…ISHREKRQQR (105 aa). Basic and acidic residues predominate over residues 109-127; it reads LRSEEQKKKNRKKLSEKPK. The residue at position 143 (threonine 143) is a Phosphothreonine. A compositionally biased stretch (basic residues) spans 160–169; it reads EKSKKNKKKS. Residue serine 180 is modified to Phosphoserine. A compositionally biased stretch (basic residues) spans 198 to 208; it reads HREKRQQRKRD. A phosphoserine mark is found at serine 216 and serine 251. Lysine 264 is subject to N6-acetyllysine. A disordered region spans residues 280 to 582; that stretch reads TVNGGGWNEK…KKKKKARRET (303 aa). A phosphoserine mark is found at serine 298, serine 306, serine 308, serine 311, serine 323, serine 339, serine 344, and serine 369. Residues 320-333 are compositionally biased toward polar residues; sequence SAWSQDTGDANTNG. 2 stretches are compositionally biased toward polar residues: residues 354–372 and 383–394; these read EPVS…SRNQ and NGLSSADPNSDW. The interval 381 to 443 is lung-homing for mammary tumors; the sequence is GLNGLSSADP…EGALPTGKSK (63 aa). Phosphoserine is present on residues serine 415 and serine 426. A compositionally biased stretch (basic and acidic residues) spans 421–434; the sequence is DDQKVSDDDKEKGE. Residues 441-451 show a composition bias toward basic residues; sequence KSKKKKKKKKK. The residue at position 457 (serine 457) is a Phosphoserine. Threonine 458 is modified (phosphothreonine). Serine 478, serine 494, and serine 496 each carry phosphoserine. Composition is skewed to polar residues over residues 504 to 520 and 549 to 568; these read KNSQ…STEP and NTKQ…SWES. The residue at position 568 (serine 568) is a Phosphoserine. A compositionally biased stretch (basic residues) spans 571 to 582; it reads QIKKKKKARRET.

As to quaternary structure, interacts with BCCIP, CREBBP/CBP and RELA/p65. In terms of tissue distribution, widely expressed with highest levels in muscle-dominating organs such as skeletal muscle, heart, tongue and small intestine and in endocrine glands such as thyroid and adrenal gland. Overexpressed in various cancers including breast, brain, prostate, melanoma and glioblastoma multiforme.

It is found in the endoplasmic reticulum membrane. The protein localises to the nucleus membrane. Its subcellular location is the cell junction. It localises to the tight junction. The protein resides in the nucleus. It is found in the nucleolus. The protein localises to the cytoplasm. Its subcellular location is the perinuclear region. In terms of biological role, down-regulates SLC1A2/EAAT2 promoter activity when expressed ectopically. Activates the nuclear factor kappa-B (NF-kappa-B) transcription factor. Promotes anchorage-independent growth of immortalized melanocytes and astrocytes which is a key component in tumor cell expansion. Promotes lung metastasis and also has an effect on bone and brain metastasis, possibly by enhancing the seeding of tumor cells to the target organ endothelium. Induces chemoresistance. The chain is Protein LYRIC (MTDH) from Homo sapiens (Human).